A 24-amino-acid chain; its full sequence is IRCTGSKECYSPCYKATGCPNAKC.

Cys-3 and Cys-24 are oxidised to a cystine.

The protein belongs to the short scorpion toxin superfamily. Potassium channel inhibitor family. Alpha-KTx 06 subfamily. As to expression, expressed by the venom gland.

It is found in the secreted. In terms of biological role, blocks voltage-gated potassium channels. This chain is Potassium channel toxin alpha-KTx 6 OcyKTx5, found in Opisthacanthus cayaporum (South American scorpion).